Here is a 91-residue protein sequence, read N- to C-terminus: M-myrmeciitoxin-Mb3a (91 aa).

The signal sequence occupies residues 1-21 (MKLSCLSLALAIILILAIVHS). The propeptide occupies 22–54 (PNMEVKALADPEADAFGEANAFGEADAFAEANA).

In terms of assembly, homodimer; disulfide-linked. As to expression, expressed by the venom gland and reservoir.

It is found in the secreted. Causes a significant and dose-dependent histamine release, probably by influencing the signal transduction of mast cells through a non-IgE-mediated pathway. This peptide does not have cytotoxic activities. The sequence is that of M-myrmeciitoxin-Mb3a from Myrmecia banksi (Jack jumper ant).